A 306-amino-acid chain; its full sequence is GTP-binding protein RAD (306 aa).

Residues 1–13 are compositionally biased toward gly residues; the sequence is MTLNGGSGAGGSR. The tract at residues 1-91 is disordered; the sequence is MTLNGGSGAG…GDSGSEDGVY (91 aa). Residue arginine 23 is modified to Omega-N-methylarginine. At serine 25 the chain carries Phosphoserine. Positions 56–88 are enriched in low complexity; that stretch reads AATAAGTRTQGQRLDWPEGSSDSLSSGDSGSED. GTP contacts are provided by residues 97 to 104 and 201 to 204; these read GAPGVGKS and NKSD. Residues 276–295 are calmodulin-binding; sequence AKLFLGRIVARNSRKMAFLA.

This sequence belongs to the small GTPase superfamily. RGK family. In terms of assembly, interacts with Calmodulin preferentially in the inactive, GDP-bound form. Interacts with CAMK2D. Interacts with CACNB2; interaction may be involved in beta-adrenergic regulation of heart rate and contractile force. Interaction with CACNB2 regulates the trafficking of CACNA1C to the cell membrane.

The protein resides in the cell membrane. Functionally, may regulate basal voltage-dependent L-type Ca(2+) currents and be required for beta-adrenergic augmentation of Ca(2+) influx in cardiomyocytes, thereby regulating increases in heart rate and contractile force. May play an important role in cardiac antiarrhythmia via the strong suppression of voltage-dependent L-type Ca(2+) currents. Regulates voltage-gated L-type calcium channel subunit alpha-1C trafficking to the cell membrane. Inhibits cardiac hypertrophy through the calmodulin-dependent kinase II (CaMKII) pathway. Inhibits phosphorylation and activation of CAMK2D. This Rattus norvegicus (Rat) protein is GTP-binding protein RAD (Rrad).